We begin with the raw amino-acid sequence, 201 residues long: Thymidylate kinase (201 aa).

7–14 (GIDGSGKS) lines the ATP pocket.

It belongs to the thymidylate kinase family.

It catalyses the reaction dTMP + ATP = dTDP + ADP. Its function is as follows. Phosphorylation of dTMP to form dTDP in both de novo and salvage pathways of dTTP synthesis. This Thermosipho africanus (strain TCF52B) protein is Thymidylate kinase.